The sequence spans 312 residues: D-alanine--D-alanine ligase (312 aa).

Residues 99 to 304 (KKILKAEGIP…FEDLVEKILM (206 aa)) enclose the ATP-grasp domain. 131–186 (LQTLKLPVVIKAPREGSTIGIEFVFSKQELPKAIKKVLEIDKQLLVEEFIEGVEVT) contributes to the ATP binding site. 3 residues coordinate Mg(2+): Asp257, Glu271, and Asn273.

Belongs to the D-alanine--D-alanine ligase family. Mg(2+) is required as a cofactor. Requires Mn(2+) as cofactor.

It is found in the cytoplasm. The catalysed reaction is 2 D-alanine + ATP = D-alanyl-D-alanine + ADP + phosphate + H(+). It participates in cell wall biogenesis; peptidoglycan biosynthesis. Cell wall formation. The polypeptide is D-alanine--D-alanine ligase (Carboxydothermus hydrogenoformans (strain ATCC BAA-161 / DSM 6008 / Z-2901)).